The following is a 513-amino-acid chain: Xylose import ATP-binding protein XylG (513 aa).

ABC transporter domains lie at leucine 5–glutamate 242 and leucine 259–glutamate 505. Glycine 37 to serine 44 provides a ligand contact to ATP.

This sequence belongs to the ABC transporter superfamily. Xylose importer (TC 3.A.1.2.4) family. In terms of assembly, the complex is composed of two ATP-binding proteins (XylG), two transmembrane proteins (XylH) and a solute-binding protein (XylF).

It is found in the cell inner membrane. It catalyses the reaction D-xylose(out) + ATP + H2O = D-xylose(in) + ADP + phosphate + H(+). Its function is as follows. Part of the ABC transporter complex XylFGH involved in xylose import. Responsible for energy coupling to the transport system. The sequence is that of Xylose import ATP-binding protein XylG from Escherichia coli O6:K15:H31 (strain 536 / UPEC).